Here is a 691-residue protein sequence, read N- to C-terminus: MRPSESLVETLRIQALSAPSTSGVYLWKDVHGVVIYVGKAKSLRTRLTSYFRCRHDPKTRVLMSRAAALEYLQTQHEYEALLLENTLIKKHTPRYNICLKDGKTYPLLKLTCEPFPRIFRTRQFCQDGARYFGPFPDVQILDSFLKLILRTYKIRTCTTLRKRKNPCLYYHLKRCDAPCCGWVSPRTYQKDIHEITLLLEGNIDATVARLEKRMKRAVRQEAFEAAARIRDDIQAIRCITHKSLVQDMDERARDYIAWSSTGAIVTFAVLRMRGGKLNGRELFRTRSLKNEEEILSEFLITYYSDHTIPPHLFVHSSAGLAEHWLSHKAGTQCTVTLIPLHTFPTPQTPSSTVTTNAPTLAASQNSNAVQDSGLRSCSETSTMHTLQKAHDACTASEGTRENTPHESAHTPHHRAILAMAQLNAHEDITRYLKNRGADDALKELQKQLHLARIPTLIEGFDISHLGGKYTVASLICFKNGAPDTKNYRLFNLRAHDTRIDDFASMREAIARRYTHTPEGYTLPDLILVDGGIGHVSAAQHVLDALGLSIPLVGLAKRAEELFIPNSPTPLVLDRRNPALHMLQRIRDEAHRFAITRNRHLRTKKELVLSFERLPHVGKVRAHRLLAHFGSFRSLQSATPQDIATAIHIPLTQAHTILHAATRSTTAPVREEYKEHEHDPQGESPGPGRKTD.

In terms of domain architecture, GIY-YIG spans 20–97 (STSGVYLWKD…IKKHTPRYNI (78 aa)). Residues 204–239 (DATVARLEKRMKRAVRQEAFEAAARIRDDIQAIRCI) enclose the UVR domain. Residues 662-691 (RSTTAPVREEYKEHEHDPQGESPGPGRKTD) are disordered. A compositionally biased stretch (basic and acidic residues) spans 668–680 (VREEYKEHEHDPQ).

Belongs to the UvrC family. In terms of assembly, interacts with UvrB in an incision complex.

Its subcellular location is the cytoplasm. Its function is as follows. The UvrABC repair system catalyzes the recognition and processing of DNA lesions. UvrC both incises the 5' and 3' sides of the lesion. The N-terminal half is responsible for the 3' incision and the C-terminal half is responsible for the 5' incision. This Treponema pallidum (strain Nichols) protein is UvrABC system protein C.